We begin with the raw amino-acid sequence, 404 residues long: Nicotinate phosphoribosyltransferase (404 aa).

A Phosphohistidine; by autocatalysis modification is found at His-225.

This sequence belongs to the NAPRTase family. In terms of processing, transiently phosphorylated on a His residue during the reaction cycle. Phosphorylation strongly increases the affinity for substrates and increases the rate of nicotinate D-ribonucleotide production. Dephosphorylation regenerates the low-affinity form of the enzyme, leading to product release.

It catalyses the reaction nicotinate + 5-phospho-alpha-D-ribose 1-diphosphate + ATP + H2O = nicotinate beta-D-ribonucleotide + ADP + phosphate + diphosphate. The protein operates within cofactor biosynthesis; NAD(+) biosynthesis; nicotinate D-ribonucleotide from nicotinate: step 1/1. Functionally, catalyzes the synthesis of beta-nicotinate D-ribonucleotide from nicotinate and 5-phospho-D-ribose 1-phosphate at the expense of ATP. This is Nicotinate phosphoribosyltransferase from Acinetobacter baumannii (strain ATCC 17978 / DSM 105126 / CIP 53.77 / LMG 1025 / NCDC KC755 / 5377).